Reading from the N-terminus, the 503-residue chain is Probable cytosol aminopeptidase (503 aa).

The Mn(2+) site is built by Lys270 and Asp275. The active site involves Lys282. Residues Asp293, Asp352, and Glu354 each contribute to the Mn(2+) site. Arg356 is an active-site residue.

Belongs to the peptidase M17 family. It depends on Mn(2+) as a cofactor.

The protein localises to the cytoplasm. The enzyme catalyses Release of an N-terminal amino acid, Xaa-|-Yaa-, in which Xaa is preferably Leu, but may be other amino acids including Pro although not Arg or Lys, and Yaa may be Pro. Amino acid amides and methyl esters are also readily hydrolyzed, but rates on arylamides are exceedingly low.. It catalyses the reaction Release of an N-terminal amino acid, preferentially leucine, but not glutamic or aspartic acids.. Presumably involved in the processing and regular turnover of intracellular proteins. Catalyzes the removal of unsubstituted N-terminal amino acids from various peptides. This is Probable cytosol aminopeptidase from Salmonella typhi.